A 312-amino-acid polypeptide reads, in one-letter code: Taste receptor type 2 member 103 (312 aa).

The Extracellular segment spans residues 1 to 6; that stretch reads MVLTIR. The helical transmembrane segment at 7-27 threads the bilayer; sequence AILWVTLITIISLEFIIGILG. Residues 28 to 61 lie on the Cytoplasmic side of the membrane; that stretch reads NVFIALVNIIDWVKRGKISAVDKTYMALAISRTA. The chain crosses the membrane as a helical span at residues 62-82; that stretch reads FLLSLITGFLVSLLDPALLGM. Over 83–92 the chain is Extracellular; that stretch reads RTMVRLLTIS. A helical transmembrane segment spans residues 93–113; the sequence is WMVTNHFSVWFATCLSIFYFL. Topologically, residues 114–132 are cytoplasmic; the sequence is KIANFSNSIFLVLKWEAKK. A helical transmembrane segment spans residues 133-153; that stretch reads VVSVTLVVSVIILIMNIIVIN. At 154 to 185 the chain is on the extracellular side; the sequence is KFTDRLQVNTLQNCSTSNTLKDYGLFLFISTG. N166 carries N-linked (GlcNAc...) asparagine glycosylation. The helical transmembrane segment at 186–206 threads the bilayer; sequence FTLTPFAVSLTMFLLLIFSLW. The Cytoplasmic portion of the chain corresponds to 207-229; sequence RHLKNMCHSATGSRDVSTVAHIK. Residues 230–250 form a helical membrane-spanning segment; that stretch reads GLQTVVTFLLLYTAFVMSLLS. Residues 251-264 are Extracellular-facing; the sequence is ESLNINIQHTNLLS. The chain crosses the membrane as a helical span at residues 265-285; the sequence is HFLRSIGVAFPTGHSCVLILG. The Cytoplasmic portion of the chain corresponds to 286–312; sequence NSKLRQASLSVILWLRYKYKHIENWGP.

It belongs to the G-protein coupled receptor T2R family. As to expression, expressed in subsets of taste receptor cells of the tongue and palate epithelium and exclusively in gustducin-positive cells. Expressed in 15% taste bud cells in circumvallate and foliate papillae but only in 2% in fungiform papillae.

It localises to the membrane. Gustducin-coupled receptor implicated in the perception of bitter compounds in the oral cavity and the gastrointestinal tract. Signals through PLCB2 and the calcium-regulated cation channel TRPM5. The protein is Taste receptor type 2 member 103 (Tas2r103) of Mus musculus (Mouse).